The sequence spans 366 residues: MASNGMASSPSSFFPPNFLLHMAQQQAAPPHDPQEHHHHHHHGHHGHHHEQQQQQQHHHHLGPPPPPPPHPHNPFLPSSAQCPSLQEFRGMAPMLGKRPMSYGDGGGGGDEVNGGGEDELSDDGSQAGEKKRRLNVEQVRTLEKNFELGNKLEPERKMQLARALGLQPRQVAIWFQNRRARWKTKQLEKDYDALKRQLDAVKAENDALLNHNKKLQAEIVALKGREAASELINLNKETEASCSNRSENSSEINLDISRTPPPDAAALDTAPTAHHHHHGGGGGGGGGGGMIPFYTSIARPASGGGVDIDQLLHSSSGGAGGPKMEHHGGGGNVQAASVDTASFGNLLCGVDEPPPFWPWPDHQHFH.

Disordered stretches follow at residues 25–81 (QQAA…SSAQ) and 94–132 (MLGK…EKKR). Over residues 36 to 48 (HHHHHHHGHHGHH) the composition is skewed to basic residues. Positions 62-74 (GPPPPPPPHPHNP) are enriched in pro residues. Residues 103–115 (GDGGGGGDEVNGG) are compositionally biased toward gly residues. Residues 127–186 (AGEKKRRLNVEQVRTLEKNFELGNKLEPERKMQLARALGLQPRQVAIWFQNRRARWKTKQ) constitute a DNA-binding region (homeobox). The interval 185–229 (KQLEKDYDALKRQLDAVKAENDALLNHNKKLQAEIVALKGREAAS) is leucine-zipper. 2 disordered regions span residues 239–287 (EASC…GGGG) and 312–336 (LHSS…VQAA). Residues 240 to 252 (ASCSNRSENSSEI) show a composition bias toward polar residues.

Belongs to the HD-ZIP homeobox family. Class I subfamily. In terms of tissue distribution, expressed in seedlings, roots, stems, leaf blades and panicles.

It is found in the nucleus. Functionally, probable transcription factor. The polypeptide is Homeobox-leucine zipper protein HOX21 (HOX21) (Oryza sativa subsp. japonica (Rice)).